We begin with the raw amino-acid sequence, 488 residues long: Peptidoglycan endopeptidase LytF (488 aa).

The N-terminal stretch at 1 to 26 (MKKKLAAGLTASAIVGTTLVVTPAEA) is a signal peptide. LysM domains follow at residues 27–70 (ATIK…TLTI) and 92–135 (SVYT…KLKV). Disordered regions lie at residues 70–93 (IPGS…GSSV), 137–176 (GTVS…TGTY), and 218–239 (KSSG…TSAT). 2 stretches are compositionally biased toward low complexity: residues 72–93 (GSKS…GSSV) and 140–172 (SSSS…SSSS). The region spanning 174 to 217 (GTYKVQLGDSLWKIANKVNMSIAELKVLNNLKSDTIYVNQVLKT) is the LysM 3 domain. Residues 240–283 (TKYTVKSGDSLWKIANNYNLTVQQIRNINNLKSDVLYVGQVLKL) form the LysM 4 domain. Positions 286 to 306 (KASSGSSSSSSSSSNASSGTT) are disordered. Positions 307–350 (TTYTVKSGDSLWVIAQKFNVTAQQIREKNNLKTDVLQVGQKLVI) constitute a LysM 5 domain. The NlpC/P60 domain occupies 370–488 (SAKINTMISA…QRYLGAKRYF (119 aa)). Cys400 (nucleophile) is an active-site residue. Residue His449 is the Proton acceptor of the active site. Asn461 is an active-site residue.

Belongs to the peptidase C40 family.

The protein resides in the secreted. It is found in the cell wall. Its activity is regulated as follows. Is inhibited in vitro by para-hydroxymercuribenzoate, a sulfydryl inhibitor. Functionally, cell wall hydrolase that cleaves gamma-D-glutamate-meso-diaminopimelate bonds in peptidoglycan. LytF is necessary and sufficient for vegetative daughter cell separation, and also seems to play a role in cell autolysis. This Bacillus subtilis (strain 168) protein is Peptidoglycan endopeptidase LytF (lytF).